The sequence spans 73 residues: Kazal peptide Pr13a (73 aa).

An N-terminal signal peptide occupies residues 1 to 20 (MKYIILFLVLIGLQANLALG). Residues 21–73 (SKCKCDCTKYPYSPVCAKELKTGDTETFNNVCQLQCYNCTHMKNYVVIYSGSC) enclose the Kazal-like domain. Cystine bridges form between Cys23–Cys59, Cys27–Cys52, and Cys36–Cys73.

In terms of tissue distribution, expressed by the venom gland (anterior main gland) (at protein level).

Its subcellular location is the secreted. Its function is as follows. May act as a serine protease inhibitor, since it possess the kazal serine protease inhibitor signature. The sequence is that of Kazal peptide Pr13a from Platymeris rhadamanthus (Red spot assassin bug).